A 333-amino-acid polypeptide reads, in one-letter code: Glycerol-3-phosphate dehydrogenase [NAD(P)+] (333 aa).

NADPH is bound by residues S10, W11, and K105. Residues K105, G136, and T138 each coordinate sn-glycerol 3-phosphate. A140 lines the NADPH pocket. K191, D244, S254, R255, and N256 together coordinate sn-glycerol 3-phosphate. Catalysis depends on K191, which acts as the Proton acceptor. NADPH is bound at residue R255. V279 and E281 together coordinate NADPH.

It belongs to the NAD-dependent glycerol-3-phosphate dehydrogenase family.

It is found in the cytoplasm. The enzyme catalyses sn-glycerol 3-phosphate + NAD(+) = dihydroxyacetone phosphate + NADH + H(+). It carries out the reaction sn-glycerol 3-phosphate + NADP(+) = dihydroxyacetone phosphate + NADPH + H(+). It participates in membrane lipid metabolism; glycerophospholipid metabolism. Its function is as follows. Catalyzes the reduction of the glycolytic intermediate dihydroxyacetone phosphate (DHAP) to sn-glycerol 3-phosphate (G3P), the key precursor for phospholipid synthesis. This is Glycerol-3-phosphate dehydrogenase [NAD(P)+] from Syntrophotalea carbinolica (strain DSM 2380 / NBRC 103641 / GraBd1) (Pelobacter carbinolicus).